Reading from the N-terminus, the 551-residue chain is MGKPGRSSIPSVGVHHQGPMSFPDFSASDAQIQWQRFCDLLWYHEDLGIWLDISRMHVNPSHLEQLQPGFDKAFAAMAELEAGAIANPDEQRQVGHYWLRTPQLAPNEAVRDQIATEIDQIDQFGRDVISGVIKAPGGQPFTDVLWIGIGGSGLGPLLMIRALQGHGSGLPFHFFDNVDPNGMSAVLAELDDRLATTLVVTVSKSGGTPEPHLGMEQARHRVESRGGRWADQAVAITMVDSKLDREAQQDGWLKSFSMFDWVGGRTSITSAVGLLPGALIGADIRDFLAGAAQMDDATRLADLRRNPAALMAASWFVAGDGKGRRDMVVLPYRDRLEVFSRYLQQLVMESLGKRLDRDGNEVNQGIAVYGNKGSTDQHAYVQQLRDGVDNFFATFIEVLEDVSDIPVIKDECPGDFLDGFLQGTRSALTEGGRQSLSISMRRFDARRLGALIALFERAVGFYGDLVNINAYHQPGVEAGKKAAAAILDLQSRVEAVLKDGAPRTVSEIRQAVGDGSDEAIFWIMRHLAGNDRGYRAEGDWANPASIRFSCS.

Residue Glu-349 is the Proton donor of the active site. Residues His-378 and Lys-480 contribute to the active site.

It belongs to the GPI family.

The protein resides in the cytoplasm. It catalyses the reaction alpha-D-glucose 6-phosphate = beta-D-fructose 6-phosphate. It participates in carbohydrate biosynthesis; gluconeogenesis. It functions in the pathway carbohydrate degradation; glycolysis; D-glyceraldehyde 3-phosphate and glycerone phosphate from D-glucose: step 2/4. Catalyzes the reversible isomerization of glucose-6-phosphate to fructose-6-phosphate. This Parasynechococcus marenigrum (strain WH8102) protein is Glucose-6-phosphate isomerase.